Here is a 274-residue protein sequence, read N- to C-terminus: Thiamine kinase (274 aa).

This sequence belongs to the thiamine kinase family.

It carries out the reaction thiamine + ATP = thiamine phosphate + ADP + H(+). It functions in the pathway cofactor biosynthesis; thiamine diphosphate biosynthesis; thiamine phosphate from thiamine: step 1/1. Catalyzes the ATP-dependent phosphorylation of thiamine to thiamine phosphate. Is involved in thiamine salvage. This chain is Thiamine kinase, found in Escherichia coli (strain K12 / MC4100 / BW2952).